We begin with the raw amino-acid sequence, 1723 residues long: Lys-gingipain HG66 (1723 aa).

A signal peptide spans 1-24 (MRKLLLLIAASLLGVGLYAQNAKI). Positions 25 to 228 (KLDAPTTRTT…ETAYKQLFNR (204 aa)) are excised as a propeptide. Ca(2+)-binding residues include D313, D337, D339, F341, and E343. H444 (proton donor) is an active-site residue. The active-site Nucleophile is the C477. Residues F482 and E491 each coordinate Ca(2+). A disordered region spans residues 965 to 985 (DAPNGTPNPNPNPNPGTTTLS). Residues S987, E989, D1000, D1002, D1004, H1006, S1021, G1023, N1042, D1145, and E1146 each coordinate Ca(2+).

The protein belongs to the peptidase C25 family. Post-translationally, proteolytically cleaved into a catalytic subunit and three adhesins. Arg-gingipain is involved in this post-translational processing.

Its subcellular location is the secreted. The enzyme catalyses Endopeptidase with strict specificity for lysyl bonds.. In terms of biological role, cysteine proteinase with a strong preference for substrates with Lys in the P1 position. Hydrolyzes bovine hemoglobin, bovine serum albumin, casein, human placental type I collagen and human IgA and IgG. Disrupts the functions of polymorphonuclear leukocytes. May act as a virulence factor in the development of peridontal disease. Involved in the coaggregation of P.gingivalis with other oral bacteria. The chain is Lys-gingipain HG66 from Porphyromonas gingivalis (Bacteroides gingivalis).